A 278-amino-acid chain; its full sequence is Poly(3-hydroxyoctanoate) depolymerase (278 aa).

The N-terminal stretch at 1-33 (MPLRTLLCGLLLAVCLGQHALAASRCSERPRTL) is a signal peptide.

Its subcellular location is the secreted. The enzyme catalyses Hydrolyzes the polyester poly{oxycarbonyl[(R)-2-pentylethylene]} to oligomers.. Functionally, hydrolysis of poly(3-hydroxyoctanoic acid). The polypeptide is Poly(3-hydroxyoctanoate) depolymerase (phaZ) (Pseudomonas fluorescens).